The primary structure comprises 197 residues: uncharacterized protein (197 aa).

4 consecutive transmembrane segments (helical) span residues 9 to 29 (IYIL…RFIL), 67 to 87 (LASL…ILML), 104 to 124 (IIAV…ISVI), and 160 to 180 (GLDL…MLVI).

This sequence belongs to the YggT family.

Its subcellular location is the cell membrane. This is an uncharacterized protein from Pseudomonas aeruginosa (strain ATCC 15692 / DSM 22644 / CIP 104116 / JCM 14847 / LMG 12228 / 1C / PRS 101 / PAO1).